The following is a 461-amino-acid chain: Ig heavy chain C region, membrane-bound form (461 aa).

Positions 1–99 (ATPSPPTLYG…GESVWIKEIP (99 aa)) are CH1. The CH2 stretch occupies residues 100 to 205 (DCKGDKVHPT…TQSRNITGSQ (106 aa)). 8 N-linked (GlcNAc...) asparagine glycosylation sites follow: Asn164, Asn200, Asn245, Asn275, Asn374, Asn411, Asn415, and Asn437. The tract at residues 206–308 (VPCSCNDPVI…PLRASIHKEE (103 aa)) is CH3. The segment at 309–418 (VKDLREPSVS…IINRTVNKSS (110 aa)) is CH4. The helical transmembrane segment at 438–458 (ASTFIILFFLSIFYRAAVTLV) threads the bilayer.

The protein resides in the cell membrane. The polypeptide is Ig heavy chain C region, membrane-bound form (Heterodontus francisci (Horn shark)).